The primary structure comprises 686 residues: Secretin GspD 2 (686 aa).

The N-terminal stretch at 1–40 is a signal peptide; that stretch reads MFWRDITLSVWRKKTTGLKTKKRLLPLVLAAALCSSPVWA. Residues 41–140 form an N0, contacts GspC2 region; the sequence is EEATFTANFK…VGEGSDNYAG (100 aa). Residues 142 to 206 are N1; it reads EMVTKVVPVR…EVIQRVDHAG (65 aa). The N2 stretch occupies residues 207-279; that stretch reads NRTEEVIPLD…LIRRLDSEME (73 aa). Residues 282–357 form an N3 region; sequence GNSQVFYLKY…SLQSVIEQLD (76 aa). A secretin region spans residues 360–627; sequence RAQVHVEALI…VFIRPTILRD (268 aa). The segment at 414 to 433 is cap gate; sequence PQKGSTVISENGATTINPDT. Residues 629–686 form a s domain, contacts AspS2 region; it reads MAADGVSQRKYNYMRAEQIYRDEQGLSLMPHTAQPVLPAQNQALPPEVRAFLNAGRTR.

Belongs to the bacterial secretin family. GSP D subfamily. In terms of assembly, forms a cylindrical channel with 15 subunits, each of which interacts with the surrounding pilotin AspS2 proteins (also called GspS-beta). Interacts with inner cell membrane protein GspC2 in the periplasm. Forms multimers in the outer membrane. The isolated N0 domain forms dimers that self-assemble into rings.

Its subcellular location is the cell outer membrane. In terms of biological role, part of a type II secretion system (T2SS, formerly general secretion pathway, GSP) for the export of folded proteins across the outer membrane. This subunit forms the outer membrane channel. This chain is Secretin GspD 2 (gspD2), found in Escherichia coli O78:H11 (strain H10407 / ETEC).